Consider the following 309-residue polypeptide: D-alanine--D-alanine ligase (309 aa).

In terms of domain architecture, ATP-grasp spans 106–305; sequence KMLWKAFGLP…FEQLVVKILE (200 aa). An ATP-binding site is contributed by 136–191; sequence VEKLGLPVMVKPSLEGSSVGLTKVKRVEDLKSAVDFALKYDDTVLIEEWLSGAEFT. Positions 259, 272, and 274 each coordinate Mg(2+).

The protein belongs to the D-alanine--D-alanine ligase family. Requires Mg(2+) as cofactor. The cofactor is Mn(2+).

Its subcellular location is the cytoplasm. The catalysed reaction is 2 D-alanine + ATP = D-alanyl-D-alanine + ADP + phosphate + H(+). It participates in cell wall biogenesis; peptidoglycan biosynthesis. Its function is as follows. Cell wall formation. The sequence is that of D-alanine--D-alanine ligase from Pasteurella multocida (strain Pm70).